Here is a 604-residue protein sequence, read N- to C-terminus: Protein glass (604 aa).

Disordered stretches follow at residues 111-139 (ISTT…HGYW), 199-237 (NSHN…GGNN), 359-400 (LPPL…SPTS), and 414-434 (EDEE…GGEM). Composition is skewed to low complexity over residues 117–126 (ASSGNGSSNN) and 200–237 (SHNH…GGNN). Over residues 414–427 (EDEEDSNEDLDGDE) the composition is skewed to acidic residues. 5 C2H2-type zinc fingers span residues 437–459 (NLCR…LRTH), 465–487 (YRCP…VRTH), 493–515 (FRCP…MRTH), 521–543 (YRCS…LRIH), and 549–571 (YQCK…MRVH). The interval 566 to 604 (RHMRVHGNNNSSNGSNGATGVGGESSTGSGVGGGNSLLT) is disordered. Over residues 572–581 (GNNNSSNGSN) the composition is skewed to low complexity. A compositionally biased stretch (gly residues) spans 582 to 604 (GATGVGGESSTGSGVGGGNSLLT).

The protein localises to the nucleus. In terms of biological role, transcription factor required for gene expression specific to photoreceptor cells. This chain is Protein glass (gl), found in Drosophila melanogaster (Fruit fly).